The following is a 1447-amino-acid chain: Sister chromatid cohesion protein PDS5 homolog B (1447 aa).

One copy of the HEAT repeat lies at 383 to 419 (LLVNDHLLNFVRERTLDKRWRVRKEAMMGLAQIYKKY). N6-acetyllysine is present on K1136. Over residues 1137–1155 (PLSSAGKQSQTKSSRMETV) the composition is skewed to polar residues. Residues 1137 to 1447 (PLSSAGKQSQ…RRRSSKRERR (311 aa)) form a disordered region. A phosphoserine mark is found at S1140, S1162, S1166, S1176, S1182, and S1191. The span at 1156-1167 (SNASSSSNPSSP) shows a compositional bias: low complexity. Positions 1172-1184 (GRLDSTEMDHSEN) are enriched in basic and acidic residues. The span at 1196–1214 (KKSDKREDSDLVRSELEKP) shows a compositional bias: basic and acidic residues. S1221 carries the phosphoserine modification. Positions 1225-1243 (PEEKLGMDDLSKLVQEQKP) are enriched in basic and acidic residues. The segment covering 1245-1254 (GSQRGRKRGH) has biased composition (basic residues). The a.T hook 1 DNA-binding region spans 1247–1259 (QRGRKRGHAASES). 2 positions are modified to phosphoserine: S1257 and S1259. Residues 1265–1274 (PEEKRHKEEL) show a composition bias toward basic and acidic residues. S1283 is subject to Phosphoserine. A DNA-binding region (a.T hook 2) is located at residues 1287–1299 (KGKRGRPPKPLGG). Basic residues-rich tracts occupy residues 1309–1318 (TSKKGNKKKP) and 1341–1352 (KSKQQRTSKRAQ). S1357 and S1365 each carry phosphoserine. Positions 1358 to 1371 (PETSAVESTQSTPQ) are enriched in polar residues. T1366 bears the Phosphothreonine mark. The residue at position 1368 (S1368) is a Phosphoserine. Phosphothreonine is present on residues T1369 and T1380. Positions 1371-1383 (QKGRGRPSKTPSP) form a DNA-binding region, a.T hook 3. The segment covering 1378–1387 (SKTPSPSQPK) has biased composition (low complexity). A phosphoserine mark is found at S1382, S1416, and S1419. Residues 1422-1432 (TTQEGAEEEDI) show a composition bias toward acidic residues. Over residues 1437-1447 (VRRRSSKRERR) the composition is skewed to basic residues.

It belongs to the PDS5 family. In terms of assembly, interacts with the cohesin complex. Interacts with RAD21; the interaction is direct. Interacts with WAPL (via FGF motifs) or CDCA5 (via the FGF motif); the interaction is direct, cohesin-dependent and competitive. Highly expressed in intact prostate with levels decreasing after castration. Expressed exclusively in prostate cells inhibited from proliferating by long-term androgen exposure.

Its subcellular location is the nucleus. In terms of biological role, regulator of sister chromatid cohesion in mitosis which may stabilize cohesin complex association with chromatin. May couple sister chromatid cohesion during mitosis to DNA replication. Cohesion ensures that chromosome partitioning is accurate in both meiotic and mitotic cells and plays an important role in DNA repair. Plays a role in androgen-induced proliferative arrest in prostate cells. In Rattus norvegicus (Rat), this protein is Sister chromatid cohesion protein PDS5 homolog B (Pds5b).